The following is a 343-amino-acid chain: Small ribosomal subunit biogenesis GTPase RsgA (343 aa).

The CP-type G domain occupies 116–275 (RGQLKPVAAN…LIDSPGIREF (160 aa)). Residues 163-166 (NKAD) and 217-225 (GQSGVGKSS) each bind GTP. The Zn(2+) site is built by Cys299, Cys304, His306, and Cys312.

It belongs to the TRAFAC class YlqF/YawG GTPase family. RsgA subfamily. As to quaternary structure, monomer. Associates with 30S ribosomal subunit, binds 16S rRNA. Zn(2+) is required as a cofactor.

The protein localises to the cytoplasm. In terms of biological role, one of several proteins that assist in the late maturation steps of the functional core of the 30S ribosomal subunit. Helps release RbfA from mature subunits. May play a role in the assembly of ribosomal proteins into the subunit. Circularly permuted GTPase that catalyzes slow GTP hydrolysis, GTPase activity is stimulated by the 30S ribosomal subunit. In Pseudomonas syringae pv. tomato (strain ATCC BAA-871 / DC3000), this protein is Small ribosomal subunit biogenesis GTPase RsgA.